The following is an 870-amino-acid chain: Valine--tRNA ligase (870 aa).

The short motif at 42–52 (PNVTGVLHIGH) is the 'HIGH' region element. The short motif at 527–531 (KMSKS) is the 'KMSKS' region element. Position 530 (lysine 530) interacts with ATP. Positions 800-870 (LENVDLSGIL…ISVELQNLRG (71 aa)) form a coiled coil.

Belongs to the class-I aminoacyl-tRNA synthetase family. ValS type 1 subfamily. In terms of assembly, monomer.

The protein localises to the cytoplasm. It catalyses the reaction tRNA(Val) + L-valine + ATP = L-valyl-tRNA(Val) + AMP + diphosphate. Its function is as follows. Catalyzes the attachment of valine to tRNA(Val). As ValRS can inadvertently accommodate and process structurally similar amino acids such as threonine, to avoid such errors, it has a 'posttransfer' editing activity that hydrolyzes mischarged Thr-tRNA(Val) in a tRNA-dependent manner. This chain is Valine--tRNA ligase, found in Campylobacter jejuni (strain RM1221).